The primary structure comprises 403 residues: Phosphoglycerate kinase (403 aa).

Residues D21–N23, R36, H59–R62, R119, and R154 contribute to the substrate site. Residues K207, G299, E330, and G357 to A360 contribute to the ATP site.

The protein belongs to the phosphoglycerate kinase family. In terms of assembly, monomer.

It is found in the cytoplasm. The enzyme catalyses (2R)-3-phosphoglycerate + ATP = (2R)-3-phospho-glyceroyl phosphate + ADP. It participates in carbohydrate degradation; glycolysis; pyruvate from D-glyceraldehyde 3-phosphate: step 2/5. This Chlamydia trachomatis serovar A (strain ATCC VR-571B / DSM 19440 / HAR-13) protein is Phosphoglycerate kinase.